The following is a 372-amino-acid chain: Actin-related protein T3 (372 aa).

The protein belongs to the actin family. In terms of assembly, interacts with PFN3. As to expression, ubiquitously expressed.

Its subcellular location is the cytoplasm. It localises to the cytoskeleton. The protein resides in the nucleus. The polypeptide is Actin-related protein T3 (ACTRT3) (Homo sapiens (Human)).